We begin with the raw amino-acid sequence, 233 residues long: Orotidine 5'-phosphate decarboxylase (233 aa).

Substrate-binding positions include Asp-9, Lys-31, 58–67 (DLKLHDIPNT), Thr-120, Arg-182, Gln-191, Gly-211, and Arg-212. Residue Lys-60 is the Proton donor of the active site.

It belongs to the OMP decarboxylase family. Type 1 subfamily. Homodimer.

It carries out the reaction orotidine 5'-phosphate + H(+) = UMP + CO2. Its pathway is pyrimidine metabolism; UMP biosynthesis via de novo pathway; UMP from orotate: step 2/2. Catalyzes the decarboxylation of orotidine 5'-monophosphate (OMP) to uridine 5'-monophosphate (UMP). The chain is Orotidine 5'-phosphate decarboxylase from Listeria innocua serovar 6a (strain ATCC BAA-680 / CLIP 11262).